Here is a 278-residue protein sequence, read N- to C-terminus: HTH-type transcriptional regulator HdfR (278 aa).

The HTH lysR-type domain maps to 1-58 (MDTELLKTFLEVSRTRHFGRAAEALYLTQSAVSFRIRQLENQLGVNLFTRHRNNIRLT). Residues 18 to 37 (FGRAAEALYLTQSAVSFRIR) constitute a DNA-binding region (H-T-H motif).

It belongs to the LysR transcriptional regulatory family.

Functionally, negatively regulates the transcription of the flagellar master operon flhDC by binding to the upstream region of the operon. The chain is HTH-type transcriptional regulator HdfR from Salmonella dublin (strain CT_02021853).